A 391-amino-acid chain; its full sequence is FLUCTUATING-LIGHT-ACCLIMATION protein 1, chloroplastic (391 aa).

A chloroplast-targeting transit peptide spans 1–48 (MASSSTFLELTPFQWNQPLPYTQRPHHRTVLLYSKPQRRSNSIRLQIS). The helical transmembrane segment at 87 to 107 (AIAAVLLGLLLFYDPNSALAA) threads the bilayer. Residues 116–138 (SFSSRSRSSSSSSSQSYSVPRTS) are compositionally biased toward low complexity. Residues 116–140 (SFSSRSRSSSSSSSQSYSVPRTSNP) are disordered. Helical transmembrane passes span 168 to 188 (FGFG…AFVL) and 321 to 341 (YIVV…PING).

It belongs to the FLAP family.

Its subcellular location is the plastid. It localises to the chloroplast thylakoid membrane. It is found in the chloroplast membrane. The protein resides in the chloroplast envelope. In terms of biological role, monitors proton H(+) homeostasis in chloroplasts to manipulate luminal acidification levels appropriately to balance photoprotection and photochemical processes. Required during acclimation response to fluctuating light (e.g. photosynthetic activity optimization) by controlling non-photochemical quenching (NPQ); acts independently from DLDG1. The protein is FLUCTUATING-LIGHT-ACCLIMATION protein 1, chloroplastic of Arabidopsis thaliana (Mouse-ear cress).